The sequence spans 280 residues: Large ribosomal subunit protein uL2 (280 aa).

The tract at residues 213–280 (RWKGKRPSVR…RRRTGKKHAR (68 aa)) is disordered. The span at 268-280 (IVRRRRTGKKHAR) shows a compositional bias: basic residues.

The protein belongs to the universal ribosomal protein uL2 family. As to quaternary structure, part of the 50S ribosomal subunit. Forms a bridge to the 30S subunit in the 70S ribosome.

One of the primary rRNA binding proteins. Required for association of the 30S and 50S subunits to form the 70S ribosome, for tRNA binding and peptide bond formation. It has been suggested to have peptidyltransferase activity; this is somewhat controversial. Makes several contacts with the 16S rRNA in the 70S ribosome. The chain is Large ribosomal subunit protein uL2 from Mycobacterium leprae (strain Br4923).